A 110-amino-acid polypeptide reads, in one-letter code: Putative pterin-4-alpha-carbinolamine dehydratase (110 aa).

This sequence belongs to the pterin-4-alpha-carbinolamine dehydratase family.

It carries out the reaction (4aS,6R)-4a-hydroxy-L-erythro-5,6,7,8-tetrahydrobiopterin = (6R)-L-erythro-6,7-dihydrobiopterin + H2O. This chain is Putative pterin-4-alpha-carbinolamine dehydratase, found in Vibrio vulnificus (strain CMCP6).